The sequence spans 601 residues: Group B oligopeptidase PepB (601 aa).

H386 provides a ligand contact to Zn(2+). E387 is an active-site residue. Zn(2+)-binding residues include H390 and H393.

This sequence belongs to the peptidase M3B family. Zn(2+) is required as a cofactor.

The protein localises to the cytoplasm. In terms of biological role, has oligopeptidase activity and degrades a variety of small bioactive peptides, including bradykinin, neurotensin, and peptide fragments of substance P and adrenocorticotropin. Also hydrolyzes the synthetic collagen-like substrate N-(3-[2-furyl]acryloyl)-Leu-Gly-Pro-Ala (FALGPA). The polypeptide is Group B oligopeptidase PepB (pepB) (Streptococcus agalactiae serotype III (strain NEM316)).